Reading from the N-terminus, the 45-residue chain is uncharacterized protein (45 aa).

The C2H2-type zinc finger occupies 2–25 (YQCLRCGGIFNKRREVVEHLLVGH).

This is an uncharacterized protein from Sulfolobus spindle-shape virus 1 (SSV1).